A 351-amino-acid polypeptide reads, in one-letter code: Histidinol-phosphate aminotransferase (351 aa).

Position 221 is an N6-(pyridoxal phosphate)lysine (lysine 221).

The protein belongs to the class-II pyridoxal-phosphate-dependent aminotransferase family. Histidinol-phosphate aminotransferase subfamily. In terms of assembly, homodimer. Pyridoxal 5'-phosphate serves as cofactor.

It catalyses the reaction L-histidinol phosphate + 2-oxoglutarate = 3-(imidazol-4-yl)-2-oxopropyl phosphate + L-glutamate. It functions in the pathway amino-acid biosynthesis; L-histidine biosynthesis; L-histidine from 5-phospho-alpha-D-ribose 1-diphosphate: step 7/9. This Staphylococcus haemolyticus (strain JCSC1435) protein is Histidinol-phosphate aminotransferase.